Consider the following 470-residue polypeptide: Myricetin 3-O-rhamnoside 1,2-glucosyltransferase UGT709G2 (470 aa).

Histidine 20 functions as the Proton acceptor in the catalytic mechanism. Histidine 20 provides a ligand contact to an anthocyanidin. Aspartate 117 (charge relay) is an active-site residue. UDP-alpha-D-glucose contacts are provided by alanine 340, glutamine 342, histidine 357, tryptophan 360, asparagine 361, serine 362, and glutamate 365. An an anthocyanidin-binding site is contributed by alanine 380. 2 residues coordinate UDP-alpha-D-glucose: aspartate 381 and glutamine 382.

This sequence belongs to the UDP-glycosyltransferase family. In terms of tissue distribution, expressed in young cromes.

The catalysed reaction is myricetin 3-O-alpha-L-rhamnoside + UDP-alpha-D-glucose = myricetin 3-O-[beta-D-glucosyl-(1-&gt;2)-alpha-L-rhamnoside] + UDP + H(+). It functions in the pathway flavonoid metabolism. Functionally, glucosyltransferase involved in montbretin A (MbA) biosynthesis. Catalyzes the glucosylation of myricetin 3-O-alpha-L-rhamnoside (MR) to produce myricetin 3-O-[beta-D-glucosyl-(1-&gt;2)-alpha-L-rhamnoside] (MRG), a precursor of MbA. MbA is a potent inhibitor of human pancreatic alpha-amylase and is being developed as drug candidate to treat type-2 diabetes. In vitro, is able to transfer UDP-xylose with 50-fold less efficiency compared with UDP-glucose. In vitro, can use myricetin 3-O-glucoside and quercetin 3-O-glucoside as substrates, although these two flavonoids may not be physiological substrates in vivo. In Crocosmia x crocosmiiflora (Montbretia), this protein is Myricetin 3-O-rhamnoside 1,2-glucosyltransferase UGT709G2.